A 154-amino-acid chain; its full sequence is Ascorbate-specific PTS system EIIA component (154 aa).

Positions 6–150 constitute a PTS EIIA type-2 domain; sequence SLAENKSIRL…QEVLDLIDRT (145 aa). The Tele-phosphohistidine intermediate role is filled by H68. H68 bears the Phosphohistidine mark.

It localises to the cytoplasm. The phosphoenolpyruvate-dependent sugar phosphotransferase system (sugar PTS), a major carbohydrate active transport system, catalyzes the phosphorylation of incoming sugar substrates concomitantly with their translocation across the cell membrane. The enzyme II UlaABC PTS system is involved in ascorbate transport. The sequence is that of Ascorbate-specific PTS system EIIA component (ulaC) from Escherichia coli O157:H7.